The following is a 302-amino-acid chain: Putative gluconeogenesis factor (302 aa).

It belongs to the gluconeogenesis factor family.

The protein localises to the cytoplasm. Its function is as follows. Required for morphogenesis under gluconeogenic growth conditions. The sequence is that of Putative gluconeogenesis factor (ybhK) from Salmonella typhimurium (strain LT2 / SGSC1412 / ATCC 700720).